Consider the following 156-residue polypeptide: Putative pre-16S rRNA nuclease (156 aa).

This sequence belongs to the YqgF nuclease family.

The protein resides in the cytoplasm. Its function is as follows. Could be a nuclease involved in processing of the 5'-end of pre-16S rRNA. The sequence is that of Putative pre-16S rRNA nuclease from Ehrlichia ruminantium (strain Gardel).